Consider the following 655-residue polypeptide: ATP-dependent zinc metalloprotease FtsH (655 aa).

At 1–17 (MPIETEPNRTRKNFEPK) the chain is on the cytoplasmic side. A helical transmembrane segment spans residues 18–38 (RFGGSLFILFTLLLFLNLFVL). At 39–124 (RGPRFPITAY…APPPSSLSWL (86 aa)) the chain is on the lumenal side. The chain crosses the membrane as a helical span at residues 125–145 (PTLLGWVVPPLIFFGIWSWLI). Residues 146–655 (NRNQGAGPAA…LNSHQLIGIN (510 aa)) are Cytoplasmic-facing. Residue 216–223 (GPPGTGKT) participates in ATP binding. Position 440 (histidine 440) interacts with Zn(2+). The active site involves glutamate 441. Residues histidine 444 and aspartate 517 each contribute to the Zn(2+) site.

In the central section; belongs to the AAA ATPase family. The protein in the C-terminal section; belongs to the peptidase M41 family. In terms of assembly, homohexamer. Requires Zn(2+) as cofactor.

The protein localises to the cellular thylakoid membrane. Its function is as follows. Acts as a processive, ATP-dependent zinc metallopeptidase for both cytoplasmic and membrane proteins. Plays a role in the quality control of integral membrane proteins. The chain is ATP-dependent zinc metalloprotease FtsH from Acaryochloris marina (strain MBIC 11017).